The following is a 217-amino-acid chain: Membrane-spanning 4-domains subfamily A member 6C (217 aa).

A compositionally biased stretch (polar residues) spans M1–N20. Residues M1–R33 are disordered. The Cytoplasmic portion of the chain corresponds to M1–K46. The helical transmembrane segment at V47–A67 threads the bilayer. At S68–K84 the chain is on the extracellular side. The helical transmembrane segment at S85–T105 threads the bilayer. The Cytoplasmic portion of the chain corresponds to E106–N121. A helical membrane pass occupies residues I122–L142. The Extracellular portion of the chain corresponds to H143 to S186. Residues V187–L207 form a helical membrane-spanning segment. Over R208 to M217 the chain is Cytoplasmic.

This sequence belongs to the MS4A family. Expressed only by thymus, spleen, peripheral lymph node and bone marrow.

It localises to the membrane. In terms of biological role, may be involved in signal transduction as a component of a multimeric receptor complex. The polypeptide is Membrane-spanning 4-domains subfamily A member 6C (Ms4a6c) (Mus musculus (Mouse)).